Reading from the N-terminus, the 286-residue chain is Pantothenate synthetase (286 aa).

Residue M30–H37 coordinates ATP. The Proton donor role is filled by H37. Q61 is a (R)-pantoate binding site. Q61 serves as a coordination point for beta-alanine. G148 to D151 contacts ATP. Residue Q154 participates in (R)-pantoate binding. ATP-binding positions include V177 and L185–R188.

The protein belongs to the pantothenate synthetase family. In terms of assembly, homodimer.

The protein resides in the cytoplasm. The catalysed reaction is (R)-pantoate + beta-alanine + ATP = (R)-pantothenate + AMP + diphosphate + H(+). The protein operates within cofactor biosynthesis; (R)-pantothenate biosynthesis; (R)-pantothenate from (R)-pantoate and beta-alanine: step 1/1. Catalyzes the condensation of pantoate with beta-alanine in an ATP-dependent reaction via a pantoyl-adenylate intermediate. This chain is Pantothenate synthetase, found in Psychrobacter sp. (strain PRwf-1).